The sequence spans 723 residues: F-box protein MAX2 homolog B (723 aa).

Positions 2-55 (AKTPIPFTTLNDLPDVILSNIIAAVSDTRSRNATALVCHKWLVLERSTRTSLTL) constitute an F-box domain.

Part of a putative SCF (SKP1/Cullin/F-box) ubiquitin ligase complex. Interacts with KAI2IA in the presence of (-)-germacrene D. In terms of tissue distribution, mainly expressed in fully expanded leaves, lateral roots, axillary and shoot apex, and, to a lower extent, in internodes and nodes.

It is found in the nucleus. The protein resides in the cytoplasm. In terms of biological role, component of SCF(ASK-cullin-F-box) E3 ubiquitin ligase complexes, which may mediate the ubiquitination and subsequent proteasomal degradation of target proteins. Is necessary for responses to strigolactones and may be involved in the ubiquitin-mediated degradation of specific proteins that activate axillary growth. Targets probably SMAX1A to degradation upon the formation of an E3 SCF ubiquitin ligase complex (ASK-cullin-F-box) containing MAX2B and KAI2IA in response to (-)-germacrene D in the stigma. In Petunia hybrida (Petunia), this protein is F-box protein MAX2 homolog B.